Reading from the N-terminus, the 121-residue chain is MRSKFKDEHPFEKRKAEAERIRQKYSDRIPVICEKVEKSDIATIDKKKYLVPADLTVGQFVYVIRKRIKLSPEKAIFIFVDEVLPPTAALMSSIYEEHKDEDGFLYITYSGENTFGDFETA.

A lipid anchor (Phosphatidylethanolamine amidated glycine) is attached at glycine 116. Positions 117–121 are cleaved as a propeptide — removed in mature form; sequence DFETA.

It belongs to the ATG8 family. The C-terminal 5 residues are removed to expose Gly-116 at the C-terminus. The C-terminal Gly is then amidated with phosphatidylethanolamine by an activating system similar to that for ubiquitin.

Its subcellular location is the cytoplasmic vesicle. The protein localises to the autophagosome membrane. The protein resides in the vacuole membrane. Its function is as follows. Ubiquitin-like modifier involved in autophagosome formation. With cpr-1/atg4, mediates the delivery of the autophagosomes to the vacuole via the microtubule cytoskeleton. Required for selective autophagic degradation of the nucleus (nucleophagy) as well as for mitophagy which contributes to regulate mitochondrial quantity and quality by eliminating the mitochondria to a basal level to fulfill cellular energy requirements and preventing excess ROS production. Also participates in membrane fusion events that take place in the early secretory pathway. Also involved in endoplasmic reticulum-specific autophagic process and is essential for the survival of cells subjected to severe ER stress. The apg-6/atg8-PE conjugate mediates tethering between adjacent membranes and stimulates membrane hemifusion, leading to expansion of the autophagosomal membrane during autophagy. This chain is Autophagy-related protein 8 (apg-6), found in Neurospora crassa (strain ATCC 24698 / 74-OR23-1A / CBS 708.71 / DSM 1257 / FGSC 987).